Consider the following 421-residue polypeptide: Nuclear envelope integral membrane protein 2 (421 aa).

The signal sequence occupies residues 1–22; it reads MLPRLWWLVLWLQPLATLPASA. A run of 6 helical transmembrane segments spans residues 64 to 84, 147 to 167, 175 to 195, 206 to 226, 238 to 258, and 281 to 301; these read YMWS…IVYI, NIVD…FLYA, VFYY…FVLL, TFGA…CQLM, MYIL…CYSH, and LVYT…VLLF.

It belongs to the NEMP family. As to expression, in the ovary, highly expressed in somatic cells.

It is found in the nucleus inner membrane. This chain is Nuclear envelope integral membrane protein 2 (Nemp2), found in Mus musculus (Mouse).